The following is a 98-amino-acid chain: Alpha-elicitin DRE-alpha (98 aa).

Disulfide bonds link cysteine 3–cysteine 71, cysteine 27–cysteine 56, and cysteine 51–cysteine 95.

This sequence belongs to the elicitin family.

Its subcellular location is the secreted. In terms of biological role, induces local and distal defense responses (incompatible hypersensitive reaction) in plants from the solanaceae and cruciferae families. Elicits leaf necrosis and causes the accumulation of pathogenesis-related proteins. Might interact with the lipidic molecules of the plasma membrane. This Phytophthora drechsleri protein is Alpha-elicitin DRE-alpha.